The chain runs to 973 residues: Splicing regulator ARVCF (973 aa).

Positions 95–123 are disordered; the sequence is VTVEEDPGTPTSHVSIVTSEDGTTRRTET. 2 positions are modified to phosphothreonine: threonine 103 and threonine 105. The span at 103–115 shows a compositional bias: polar residues; that stretch reads TPTSHVSIVTSED. Arginine 171 bears the Omega-N-methylarginine mark. Disordered stretches follow at residues 233–254 and 267–331; these read RREAFPMGSESGPPSGRSLPEH and RSLA…QPER. At serine 268 the chain carries Phosphoserine. Residues 271–281 show a composition bias toward acidic residues; sequence ADDEGGPDLEP. The segment covering 289-303 has biased composition (basic and acidic residues); that stretch reads RRPEYGRGLRARALE. Residues serine 333, serine 336, serine 344, and serine 346 each carry the phosphoserine modification. ARM repeat units lie at residues 349–388, 391–430, 434–468, 469–509, 527–566, and 576–623; these read STRKEPRWRDPELPEVLAMLRHPVDPVKANAAAYLQHLCF, EGIKRRVRQLRGLPLLVALLDHPRAEVRRRACGALRNLSY, ADNKAAIRDCGGVPALVRLLRAARDNEVRELVTGT, LWNL…NEDS, LRNVSSDGAEARRRLRECEGLVDALLHALQSAVGRKDTDN, and MRNL…GKKA. The tract at residues 593-623 is disordered; sequence YQEVEPGIPGSAATSQRRRKDDASCFGGKKA. Serine 607 carries the post-translational modification Phosphoserine. The Nuclear localization signal signature appears at 608-624; the sequence is QRRRKDDASCFGGKKAK. The residue at position 637 (threonine 637) is a Phosphothreonine. ARM repeat units follow at residues 641–681, 694–733, 734–776, and 777–821; these read PKRT…AAGA, TYIRATVRKERGLPVLVELLQSETDKVVRAVAIALRNLSL, DQRN…AVLN, and TIHE…SHVL. The interval 771 to 955 is required for interaction with RNA-binding proteins DDX5, HNRNPH2 and SRSF1 and with mRNAs; sequence VVAVLNTIHE…VLGPGAPPFC (185 aa). The interval 844–926 is disordered; it reads FQSASTAKGP…KELLKGPGPA (83 aa). Serine 865 is subject to Phosphoserine. The residue at position 866 (threonine 866) is a Phosphothreonine. Residues 872–881 are compositionally biased toward basic and acidic residues; that stretch reads KNLDGEKSTT.

The protein belongs to the beta-catenin family. In terms of assembly, component of a ribonucleoprotein complex containing mRNAs and RNA-binding proteins including DDX5, HNRNPH2 and SRSF1 as well as ARVCF. Interacts (via the extreme C-terminus) with FRMPD2 (via the PDZ 2 domain). Interacts with CCDC85B. As to expression, expressed in optic nerve sheath envelope (at protein level). Expressed in heart (at protein level).

It is found in the cell junction. It localises to the adherens junction. Its subcellular location is the nucleus. The protein localises to the cytoplasm. Its function is as follows. Contributes to the regulation of alternative splicing of pre-mRNAs. The chain is Splicing regulator ARVCF from Rattus norvegicus (Rat).